The primary structure comprises 311 residues: Long form salivary protein D7L1 (311 aa).

The signal sequence occupies residues 1–16 (MKALIFLGAIIAGVLS). Cystine bridges form between C34–C67 and C63–C120. ADP contacts are provided by S146, R149, Y153, and K160. 3 disulfides stabilise this stretch: C170–C202, C183–C311, and C244–C258. Positions 281, 282, and 283 each coordinate ADP.

Belongs to the PBP/GOBP family. As to expression, distal lateral and medial lobes of female mosquito salivary gland (at protein level). Expressed in the head and thorax of the female mosquitoes, where the salivary glands are located. Expressed in salivary gland. Not detected in the female mosquito abdomen. Not detected in the male mosquito tissues.

The protein localises to the secreted. Its function is as follows. Modulates blood feeding of female mosquitoes on vertebrate species by binding and sequestering different mediators involved in the host response. Binds adenine, adenosine, AMP, ADP and ATP, with the highest affinity to ATP and ADP. Inhibits agonist-induced platelet aggregation and hemostasis. The sequence is that of Long form salivary protein D7L1 from Culex quinquefasciatus (Southern house mosquito).